A 421-amino-acid chain; its full sequence is Gamma-glutamyl phosphate reductase (421 aa).

It belongs to the gamma-glutamyl phosphate reductase family.

The protein resides in the cytoplasm. It catalyses the reaction L-glutamate 5-semialdehyde + phosphate + NADP(+) = L-glutamyl 5-phosphate + NADPH + H(+). It functions in the pathway amino-acid biosynthesis; L-proline biosynthesis; L-glutamate 5-semialdehyde from L-glutamate: step 2/2. In terms of biological role, catalyzes the NADPH-dependent reduction of L-glutamate 5-phosphate into L-glutamate 5-semialdehyde and phosphate. The product spontaneously undergoes cyclization to form 1-pyrroline-5-carboxylate. The protein is Gamma-glutamyl phosphate reductase of Acinetobacter baumannii (strain SDF).